Here is a 258-residue protein sequence, read N- to C-terminus: Snake venom serine protease catroxase-2 (258 aa).

Residues 1-18 (MVLIRVLANLLILQLSYA) form the signal peptide. A propeptide spanning residues 19 to 24 (QKSSEL) is cleaved from the precursor. Positions 25 to 249 (VVGGDECNIN…YNDWIQSIIA (225 aa)) constitute a Peptidase S1 domain. Cystine bridges form between Cys-31–Cys-163, Cys-50–Cys-66, Cys-98–Cys-256, Cys-142–Cys-210, Cys-174–Cys-189, and Cys-200–Cys-225. N-linked (GlcNAc...) asparagine glycosylation occurs at Asn-44. Active-site charge relay system residues include His-65 and Asp-110. The active-site Charge relay system is the Ser-204.

The protein belongs to the peptidase S1 family. Snake venom subfamily. In terms of assembly, monomer. In terms of tissue distribution, expressed by the venom gland.

The protein resides in the secreted. Snake venom serine protease that may act in the hemostasis system of the prey. The protein is Snake venom serine protease catroxase-2 of Crotalus atrox (Western diamondback rattlesnake).